Here is a 315-residue protein sequence, read N- to C-terminus: Probable cell division protein WhiA (315 aa).

A DNA-binding region (H-T-H motif) is located at residues 275–309 (TLKELGEMVSSGTVSKSGVNHRLRKIDEIADALRR).

It belongs to the WhiA family.

Functionally, involved in cell division and chromosome segregation. The chain is Probable cell division protein WhiA from Lysinibacillus sphaericus (strain C3-41).